The primary structure comprises 158 residues: Succinate dehydrogenase [ubiquinone] cytochrome b small subunit B, mitochondrial (158 aa).

The N-terminal 29 residues, 1–29, are a transit peptide targeting the mitochondrion; sequence MAALVRISSLCHRGVSPLLFRPSSLIRPL. The Mitochondrial matrix portion of the chain corresponds to 30–62; it reads AVQQKDHDCSYLISARIHATPSNYAGSGSKAAT. Residues 63 to 84 form a helical membrane-spanning segment; that stretch reads MHWTGERILSIALLSLAPVAYF. The Mitochondrial intermembrane portion of the chain corresponds to 85 to 89; that stretch reads CPSPA. Residues 90 to 110 form a helical membrane-spanning segment; sequence VDYSLAAALTLHGHWGLGQVV. His101 lines the heme b pocket. The Mitochondrial matrix segment spans residues 111–119; the sequence is TDYVHGDAK. A ubiquinone is bound at residue Tyr113. The chain crosses the membrane as a helical span at residues 120-141; sequence IKMANAGLFVLSTVTFAGLCYF. Residues 142 to 158 are Mitochondrial intermembrane-facing; sequence NYHDVGICKAVALLWSK.

This sequence belongs to the CybS family. As to quaternary structure, component of complex II composed of four subunits: the flavoprotein (FP) SDHA, iron-sulfur protein (IP) SDHB, and a cytochrome b560 composed of SDHC and SDHD.

The protein resides in the mitochondrion inner membrane. It functions in the pathway carbohydrate metabolism; tricarboxylic acid cycle. Its function is as follows. Membrane-anchoring subunit of succinate dehydrogenase (SDH) that is involved in complex II of the mitochondrial electron transport chain and is responsible for transferring electrons from succinate to ubiquinone (coenzyme Q). SDH also oxidizes malate to the non-canonical enol form of oxaloacetate, enol-oxaloacetate. Enol-oxaloacetate, which is a potent inhibitor of the succinate dehydrogenase activity, is further isomerized into keto-oxaloacetate. This is Succinate dehydrogenase [ubiquinone] cytochrome b small subunit B, mitochondrial (sdhdb) from Danio rerio (Zebrafish).